The sequence spans 220 residues: Guanylate kinase (220 aa).

In terms of domain architecture, Guanylate kinase-like spans 15–194 (GLMLVISSPS…AFDAVQSIVK (180 aa)). 22–29 (SPSGAGKS) is a binding site for ATP.

It belongs to the guanylate kinase family.

It localises to the cytoplasm. It catalyses the reaction GMP + ATP = GDP + ADP. Its function is as follows. Essential for recycling GMP and indirectly, cGMP. In Rhizobium etli (strain ATCC 51251 / DSM 11541 / JCM 21823 / NBRC 15573 / CFN 42), this protein is Guanylate kinase.